A 588-amino-acid polypeptide reads, in one-letter code: Probable fumarate reductase Ifc3 (588 aa).

The first 22 residues, 1 to 22, serve as a signal peptide directing secretion; the sequence is MKLKYLVSAMALVVLSSGTAMA. Heme c-binding residues include His31, Cys37, Cys40, His41, Cys58, Cys61, His62, His78, His81, Cys87, Cys90, His91, Gly93, His94, Cys101, Cys104, and His105. Residues 135–588 are flavoprotein-like; that stretch reads AIAAGPSETT…DNAAKHALDK (454 aa). Ala154, Asp173, Asn181, Ser182, Gly187, and Gly188 together coordinate FAD. Fumarate is bound at residue Gly187. Gly187 lines the succinate pocket. Position 218 (Arg218) interacts with heme c. 2 residues coordinate FAD: Val295 and Asp361. 3 residues coordinate succinate: His382, Ser394, and Glu395. Residues Ser394 and Glu395 each coordinate fumarate. Arg419 functions as the Proton donor in the catalytic mechanism. Position 521 (His521) interacts with fumarate. Position 521 (His521) interacts with succinate. Glu551 contacts FAD. 2 residues coordinate fumarate: Arg561 and Gly564. Succinate-binding residues include Arg561 and Gly564. Residues Gly564, Ala566, and Ile567 each contribute to the FAD site.

As to quaternary structure, homodimer. The cofactor is FAD. Requires heme c as cofactor.

It is found in the periplasm. Its function is as follows. Flavocytochrome that catalyzes the reduction of fumarate to succinate in vitro. Is essentially unidirectional, catalyzing only fumarate reduction. In vitro, can use the artificial electron donor methyl viologen. May be involved in an alternative route for electron transport to Fe(3+). The sequence is that of Probable fumarate reductase Ifc3 from Shewanella frigidimarina (strain NCIMB 400).